The following is a 292-amino-acid chain: Ribosomal protein L11 methyltransferase (292 aa).

4 residues coordinate S-adenosyl-L-methionine: Thr136, Gly159, Asp181, and Asn228.

Belongs to the methyltransferase superfamily. PrmA family.

It is found in the cytoplasm. It carries out the reaction L-lysyl-[protein] + 3 S-adenosyl-L-methionine = N(6),N(6),N(6)-trimethyl-L-lysyl-[protein] + 3 S-adenosyl-L-homocysteine + 3 H(+). In terms of biological role, methylates ribosomal protein L11. The sequence is that of Ribosomal protein L11 methyltransferase from Rhizobium rhizogenes (strain K84 / ATCC BAA-868) (Agrobacterium radiobacter).